Reading from the N-terminus, the 262-residue chain is Hydroxyethylthiazole kinase (262 aa).

Substrate is bound at residue Met50. 2 residues coordinate ATP: Arg125 and Thr171. Position 198 (Gly198) interacts with substrate.

It belongs to the Thz kinase family. Mg(2+) is required as a cofactor.

The enzyme catalyses 5-(2-hydroxyethyl)-4-methylthiazole + ATP = 4-methyl-5-(2-phosphooxyethyl)-thiazole + ADP + H(+). The protein operates within cofactor biosynthesis; thiamine diphosphate biosynthesis; 4-methyl-5-(2-phosphoethyl)-thiazole from 5-(2-hydroxyethyl)-4-methylthiazole: step 1/1. Its function is as follows. Catalyzes the phosphorylation of the hydroxyl group of 4-methyl-5-beta-hydroxyethylthiazole (THZ). This is Hydroxyethylthiazole kinase from Escherichia coli (strain 55989 / EAEC).